Consider the following 329-residue polypeptide: MISKKVVLPLVFSAPFIFFFVLCIVVVMTISRENQVGDDFIGGGDGEYETVGIAPEVERFRAVFEKYARQEGVFDQVNIIMALTMQESGGRSLDIMQSSESIGLPPNSITDPERSIEVGIKHFKKVFKQAGGDVRLTLQAYNFGSGFIDYVKKNGGKYTKKLALDFSRLQAFKMGWKSYGDPSYVDHVMRYVKGSDKNVKPVKGSMDFYETVMKEALKYEGQPYAWGGSNPETGFDCSGLVQWSFAKAGITLPRTAQEQHGATKKISEKEATAGDLVFFGGTYEGKAITHVGIYVGNGRMFNSNDSGIQYSDLKSGYWRDHLVSFGRIK.

Residues 1–29 (MISKKVVLPLVFSAPFIFFFVLCIVVVMT) form the signal peptide. Positions 59-192 (RFRAVFEKYA…SYVDHVMRYV (134 aa)) are muramidase. One can recognise a NlpC/P60 domain in the interval 206 to 329 (MDFYETVMKE…DHLVSFGRIK (124 aa)). The active-site Nucleophile is C237. Catalysis depends on H290, which acts as the Proton acceptor. The active site involves N302.

Belongs to the peptidase C40 family.

The protein localises to the secreted. The enzyme catalyses Hydrolysis of (1-&gt;4)-beta-linkages between N-acetylmuramic acid and N-acetyl-D-glucosamine residues in a peptidoglycan and between N-acetyl-D-glucosamine residues in chitodextrins.. Functionally, exhibits both muramidase and DL-endopeptidase activities. The N-terminal region acts as a N-acetylmuramidase, which cleaves the bond between N-acetylmuramic acid and N-acetyl-D-glucosamine (MurNAc-GlcNAc) in peptidoglycan. The C-terminal region acts as a DL-endopeptidase that cleaves the bond between D-gamma-glutamate and meso-diaminopimelic acid. Cannot degrade purified B.anthracis peptidoglycan, which differ from those of B.subtilis. CwlT is required for ICEBs1 conjugation: the muramidase activity is essential, whereas the peptidase activity is partially dispensable for transfer of ICEBs1. This Bacillus subtilis (strain 168) protein is Bifunctional muramidase/DL-endopeptidase CwlT.